The sequence spans 227 residues: Uracil-DNA glycosylase 2 (227 aa).

The active-site Proton acceptor is the Asp-67.

It belongs to the uracil-DNA glycosylase (UDG) superfamily. UNG family.

It is found in the cytoplasm. The enzyme catalyses Hydrolyzes single-stranded DNA or mismatched double-stranded DNA and polynucleotides, releasing free uracil.. Excises uracil residues from the DNA which can arise as a result of misincorporation of dUMP residues by DNA polymerase or due to deamination of cytosine. The polypeptide is Uracil-DNA glycosylase 2 (ung2) (Streptomyces coelicolor (strain ATCC BAA-471 / A3(2) / M145)).